The chain runs to 124 residues: Small ribosomal subunit protein uS13 (124 aa).

The interval 94–124 is disordered; sequence RGLPVRGQRTKTNARTRKGPKRTIAGKKKAR.

Belongs to the universal ribosomal protein uS13 family. In terms of assembly, part of the 30S ribosomal subunit. Forms a loose heterodimer with protein S19. Forms two bridges to the 50S subunit in the 70S ribosome.

Located at the top of the head of the 30S subunit, it contacts several helices of the 16S rRNA. In the 70S ribosome it contacts the 23S rRNA (bridge B1a) and protein L5 of the 50S subunit (bridge B1b), connecting the 2 subunits; these bridges are implicated in subunit movement. Contacts the tRNAs in the A and P-sites. The chain is Small ribosomal subunit protein uS13 from Mycolicibacterium vanbaalenii (strain DSM 7251 / JCM 13017 / BCRC 16820 / KCTC 9966 / NRRL B-24157 / PYR-1) (Mycobacterium vanbaalenii).